A 415-amino-acid chain; its full sequence is Serine--tRNA ligase (415 aa).

231-233 (TAE) contributes to the L-serine binding site. 262-264 (RSE) is an ATP binding site. Glutamate 285 is an L-serine binding site. An ATP-binding site is contributed by 349–352 (EISS). Residue serine 383 coordinates L-serine.

This sequence belongs to the class-II aminoacyl-tRNA synthetase family. Type-1 seryl-tRNA synthetase subfamily. As to quaternary structure, homodimer. The tRNA molecule binds across the dimer.

The protein localises to the cytoplasm. The catalysed reaction is tRNA(Ser) + L-serine + ATP = L-seryl-tRNA(Ser) + AMP + diphosphate + H(+). It carries out the reaction tRNA(Sec) + L-serine + ATP = L-seryl-tRNA(Sec) + AMP + diphosphate + H(+). The protein operates within aminoacyl-tRNA biosynthesis; selenocysteinyl-tRNA(Sec) biosynthesis; L-seryl-tRNA(Sec) from L-serine and tRNA(Sec): step 1/1. In terms of biological role, catalyzes the attachment of serine to tRNA(Ser). Is also able to aminoacylate tRNA(Sec) with serine, to form the misacylated tRNA L-seryl-tRNA(Sec), which will be further converted into selenocysteinyl-tRNA(Sec). This chain is Serine--tRNA ligase, found in Helicobacter pylori (strain P12).